The sequence spans 443 residues: ATP-dependent protease ATPase subunit HslU (443 aa).

ATP-binding positions include Ile-19 and 61–66 (GVGKTE). The segment at 139 to 158 (PPRDIGFSQPEEKDSNTRQV) is disordered. Residues Asp-256, Glu-321, and Arg-393 each contribute to the ATP site.

It belongs to the ClpX chaperone family. HslU subfamily. As to quaternary structure, a double ring-shaped homohexamer of HslV is capped on each side by a ring-shaped HslU homohexamer. The assembly of the HslU/HslV complex is dependent on binding of ATP.

Its subcellular location is the cytoplasm. Functionally, ATPase subunit of a proteasome-like degradation complex; this subunit has chaperone activity. The binding of ATP and its subsequent hydrolysis by HslU are essential for unfolding of protein substrates subsequently hydrolyzed by HslV. HslU recognizes the N-terminal part of its protein substrates and unfolds these before they are guided to HslV for hydrolysis. The protein is ATP-dependent protease ATPase subunit HslU of Cupriavidus taiwanensis (strain DSM 17343 / BCRC 17206 / CCUG 44338 / CIP 107171 / LMG 19424 / R1) (Ralstonia taiwanensis (strain LMG 19424)).